The chain runs to 1980 residues: Sodium channel protein type 8 subunit alpha (1980 aa).

2 disordered regions span residues 1 to 20 and 28 to 62; these read MAAR…FTPE and RIAE…LEAG. Residues 1–132 are Cytoplasmic-facing; sequence MAARLLAPPG…RIAIKILIHS (132 aa). Over residues 28–61 the composition is skewed to basic and acidic residues; sequence RIAESKLKKPPKADGSHREDDEDSKPKPNSDLEA. One copy of the I repeat lies at 114 to 442; it reads ILSPFNLIRR…KAMLEQLKKQ (329 aa). Residues 133–151 form a helical membrane-spanning segment; the sequence is VFSMIIMCTILTNCVFMTF. The Extracellular portion of the chain corresponds to 152 to 158; the sequence is SNPPDWS. The chain crosses the membrane as a helical span at residues 159–179; it reads KNVEYTFTGIYTFESLVKIIA. Over 180–193 the chain is Cytoplasmic; the sequence is RGFCIDGFTFLRDP. A helical transmembrane segment spans residues 194-211; sequence WNWLDFSVIMMAYITEFV. The Extracellular portion of the chain corresponds to 212–217; it reads NLGNVS. Asn-215 carries an N-linked (GlcNAc...) asparagine glycan. The helical transmembrane segment at 218–234 threads the bilayer; the sequence is ALRTFRVLRALKTISVI. Over 235-253 the chain is Cytoplasmic; sequence PGLKTIVGALIQSVKKLSD. Residues 254-273 form a helical membrane-spanning segment; it reads VMILTVFCLSVFALIGLQLF. The Extracellular segment spans residues 274 to 355; that stretch reads MGNLRNKCVV…PNYGYTSFDT (82 aa). Cys-281 and Cys-333 form a disulfide bridge. Residues Asn-289, Asn-295, and Asn-308 are each glycosylated (N-linked (GlcNAc...) asparagine). N-linked (GlcNAc...) (high mannose) asparagine glycosylation is present at Asn-326. The segment at residues 356-380 is an intramembrane region (pore-forming); that stretch reads FSWAFLALFRLMTQDYWENLYQLTL. Glu-373 is a Na(+) binding site. Topologically, residues 381 to 387 are extracellular; the sequence is RAAGKTY. A helical membrane pass occupies residues 388–408; that stretch reads MIFFVLVIFVGSFYLVNLILA. Residues 409–753 lie on the Cytoplasmic side of the membrane; the sequence is VVAMAYEEQN…EIVNLIVMDP (345 aa). 2 disordered regions span residues 446-530 and 568-602; these read AQAA…KAFR and FRGP…DSLF. Low complexity predominate over residues 474–486; that stretch reads PRSSSEISKLSSK. Over residues 489-500 the composition is skewed to basic residues; it reads KERRNRRKKRKQ. Basic and acidic residues-rich tracts occupy residues 501–530 and 586–602; these read KELS…KAFR and DEHS…DSLF. A phosphoserine mark is found at Ser-518 and Ser-520. The II repeat unit spans residues 735 to 1007; sequence CHPYWIKLKE…QISVIRIKKG (273 aa). The helical transmembrane segment at 754–772 threads the bilayer; the sequence is FVDLAITICIVLNTLFMAM. The Extracellular segment spans residues 773 to 783; it reads EHHPMTPQFEH. A helical membrane pass occupies residues 784–803; it reads VLAVGNLVFTGIFTAEMFLK. Residues 804-817 lie on the Cytoplasmic side of the membrane; it reads LIAMDPYYYFQEGW. The helical transmembrane segment at 818-837 threads the bilayer; the sequence is NIFDGFIVSLSLMELSLADV. Residues 838–839 are Extracellular-facing; the sequence is EG. Residues 840–857 traverse the membrane as a helical segment; sequence LSVLRSFRLLRVFKLAKS. Topologically, residues 858 to 873 are cytoplasmic; that stretch reads WPTLNMLIKIIGNSVG. Residues 874–892 traverse the membrane as a helical segment; sequence ALGNLTLVLAIIVFIFAVV. Topologically, residues 893 to 921 are extracellular; it reads GMQLFGKSYKECVCKINQDCELPRWHMHD. A disulfide bridge connects residues Cys-906 and Cys-912. An intramembrane region (pore-forming) is located at residues 922–942; it reads FFHSFLIVFRVLCGEWIETMW. Positions 936 and 939 each coordinate Na(+). Over 943–955 the chain is Extracellular; it reads DCMEVAGQAMCLI. Cys-944 and Cys-953 are disulfide-bonded. A helical transmembrane segment spans residues 956 to 976; it reads VFMMVMVIGNLVVLNLFLALL. Residues 977 to 1199 lie on the Cytoplasmic side of the membrane; it reads LSSFSADNLA…TCFLIVEHNW (223 aa). Residues 1107–1148 form a disordered region; it reads NLNTEDVSSESDPEGSKDKLDDTSSSEGSTIDIKPEVEEVPV. The stretch at 1180–1495 is one III repeat; sequence LGKSWWILRK…KKYYNAMKKL (316 aa). The helical transmembrane segment at 1200 to 1217 threads the bilayer; the sequence is FETFIIFMILLSSGALAF. The Extracellular segment spans residues 1218–1230; the sequence is EDIYIEQRKTIRT. The helical transmembrane segment at 1231-1249 threads the bilayer; it reads ILEYADKVFTYIFILEMLL. Residues 1250 to 1263 lie on the Cytoplasmic side of the membrane; the sequence is KWTAYGFVKFFTNA. Residues 1264–1282 form a helical membrane-spanning segment; the sequence is WCWLDFLIVAVSLVSLIAN. The Extracellular portion of the chain corresponds to 1283–1290; it reads ALGYSELG. Residues 1291–1309 form a helical membrane-spanning segment; that stretch reads AIKSLRTLRALRPLRALSR. The Cytoplasmic portion of the chain corresponds to 1310-1326; the sequence is FEGMRVVVNALVGAIPS. A helical transmembrane segment spans residues 1327–1346; sequence IMNVLLVCLIFWLIFSIMGV. Over 1347 to 1399 the chain is Extracellular; it reads NLFAGKYHYCFNETSEIRFEIEDVNNKTECEKLMEGNNTEIRWKNVKINFDNV. An intrachain disulfide couples Cys-1356 to Cys-1376. N-linked (GlcNAc...) asparagine glycosylation is found at Asn-1358, Asn-1372, and Asn-1383. An intramembrane region (pore-forming) is located at residues 1400 to 1421; the sequence is GAGYLALLQVATFKGWMDIMYA. Residues 1422–1438 are Extracellular-facing; it reads AVDSRKPDEQPKYEDNI. Residues 1439–1460 traverse the membrane as a helical segment; that stretch reads YMYIYFVIFIIFGSFFTLNLFI. Residues 1461-1523 are Cytoplasmic-facing; that stretch reads GVIIDNFNQQ…IVFDFVTQQA (63 aa). The residue at position 1497 (Ser-1497) is a Phosphoserine; by PKC. The stretch at 1504 to 1801 is one IV repeat; it reads IPRPLNKIQG…WEKFDPDATQ (298 aa). The chain crosses the membrane as a helical span at residues 1524-1541; the sequence is FDIVIMMLICLNMVTMMV. At 1542-1552 the chain is on the extracellular side; it reads ETDTQSKQMEN. A helical membrane pass occupies residues 1553-1571; that stretch reads ILYWINLVFVIFFTCECVL. The Cytoplasmic segment spans residues 1572–1583; it reads KMFALRHYYFTI. Residues 1584 to 1601 form a helical membrane-spanning segment; that stretch reads GWNIFDFVVVILSIVGMF. The Extracellular portion of the chain corresponds to 1602-1614; the sequence is LADIIEKYFVSPT. A helical membrane pass occupies residues 1615–1631; it reads LFRVIRLARIGRILRLI. Topologically, residues 1632–1650 are cytoplasmic; it reads KGAKGIRTLLFALMMSLPA. The chain crosses the membrane as a helical span at residues 1651–1668; sequence LFNIGLLLFLVMFIFSIF. Over 1669 to 1690 the chain is Extracellular; it reads GMSNFAYVKHEAGIDDMFNFET. The segment at residues 1691-1713 is an intramembrane region (pore-forming); it reads FGNSMICLFQITTSAGWDGLLLP. Residues 1714-1742 lie on the Extracellular side of the membrane; sequence ILNRPPDCSLDKEHPGSGFKGDCGNPSVG. The cysteines at positions 1721 and 1736 are disulfide-linked. Residues 1743–1765 form a helical membrane-spanning segment; it reads IFFFVSYIIISFLIVVNMYIAII. Residues 1766-1980 are Cytoplasmic-facing; it reads LENFSVATEE…RQKEVRESKC (215 aa). One can recognise an IQ domain in the interval 1895–1924; sequence EEVSAVVLQRAYRGHLARRGFICKKTTSNK. A disordered region spans residues 1922–1980; that stretch reads SNKLENGGTHREKKESTPSTASLPSYDSVTKPEKEKQQRAEEGRRERAKRQKEVRESKC. Positions 1938–1949 are enriched in polar residues; that stretch reads TPSTASLPSYDS. Positions 1951-1980 are enriched in basic and acidic residues; it reads TKPEKEKQQRAEEGRRERAKRQKEVRESKC.

It belongs to the sodium channel (TC 1.A.1.10) family. Nav1.6/SCN8A subfamily. In terms of assembly, the voltage-sensitive sodium channel consists of an ion-conducting pore-forming alpha subunit regulated by one or more beta-1 (SCN1B), beta-2 (SCN2B), beta-3 (SCN3B) and/or beta-4 (SCN4B) subunits. Beta-1 (SCN1B) and beta-3 (SCN3B) are non-covalently associated with alpha, while beta-2 (SCN2B) and beta-4 (SCN4B) are covalently linked by disulfide bonds. Interacts with NEDD4 and NEDD4L. Interacts with FGF13. Interacts with FGF14, GBG3, GBB2 and SCN1B. Interacts with TMEM233. Interacts with the conotoxin GVIIJ. Interacts with the spider beta/delta-theraphotoxin-Pre1a. Interacts with CALM1; the interaction modulates the inactivation rate of SCN8A. Post-translationally, may be ubiquitinated by NEDD4L; which would promote its endocytosis. Phosphorylation at Ser-1497 by PKC in a highly conserved cytoplasmic loop slows inactivation of the sodium channel and reduces peak sodium currents. In terms of tissue distribution, expressed in the hippocampus with increased expression in epileptic tissue compared to normal adjacent tissue (at protein level). As to expression, expressed in non-neuronal tissues, such as monocytes/macrophages.

Its subcellular location is the cell membrane. It is found in the cell projection. The protein localises to the axon. The protein resides in the cytoplasmic vesicle. It localises to the podosome. The catalysed reaction is Na(+)(in) = Na(+)(out). Its activity is regulated as follows. Inhibited by tetrodotoxin and, more weakly, by its metabolite 4,9-ah-tetrodotoxin. In terms of biological role, pore-forming subunit of a voltage-gated sodium channel complex assuming opened or closed conformations in response to the voltage difference across membranes and through which sodium ions selectively pass along their electrochemical gradient. Contributes to neuronal excitability by regulating action potential threshold and propagation. Functionally, more specifically expressed in non-neuronal cells, could play a role in sodium release from intracellular compartments and participate in the control of podosomes formation and macrophages adhesion and movement. The sequence is that of Sodium channel protein type 8 subunit alpha from Homo sapiens (Human).